Reading from the N-terminus, the 145-residue chain is Probable low molecular weight protein-tyrosine-phosphatase EpsP (145 aa).

Catalysis depends on cysteine 9, which acts as the Nucleophile. The active site involves arginine 15. Catalysis depends on aspartate 114, which acts as the Proton donor.

Belongs to the low molecular weight phosphotyrosine protein phosphatase family.

The catalysed reaction is O-phospho-L-tyrosyl-[protein] + H2O = L-tyrosyl-[protein] + phosphate. The protein operates within glycan metabolism; exopolysaccharide biosynthesis. Its function is as follows. May be involved in assembly or function of the EPS I polymerization/export complex and/or the EpsB ATPase. Alternatively it may function in the removal of the terminal phosphate from C55-isoprenyl pyrophosphate in order to recycle the C55-isoprenyl phosphate lipid carrier used in the synthesis of polysaccharide repeat units. In Ralstonia solanacearum (Pseudomonas solanacearum), this protein is Probable low molecular weight protein-tyrosine-phosphatase EpsP (epsP).